Reading from the N-terminus, the 136-residue chain is Protein NrdI (136 aa).

This sequence belongs to the NrdI family.

Probably involved in ribonucleotide reductase function. The sequence is that of Protein NrdI from Shigella dysenteriae serotype 1 (strain Sd197).